The sequence spans 154 residues: Small ribosomal subunit protein uS15 (154 aa).

A compositionally biased stretch (basic residues) spans 1 to 11 (MSRLHAHKRYH). The disordered stretch occupies residues 1-24 (MSRLHAHKRYHGQSGSKRPLRTTK).

Belongs to the universal ribosomal protein uS15 family. Part of the 30S ribosomal subunit.

The sequence is that of Small ribosomal subunit protein uS15 from Nanoarchaeum equitans (strain Kin4-M).